The chain runs to 60 residues: MAVQQNKKSPSKRGMHRSHNALNTPGTAIEPTTGEVHLRHHISPTGFYRGRKVLKTKADA.

The tract at residues 1–46 is disordered; sequence MAVQQNKKSPSKRGMHRSHNALNTPGTAIEPTTGEVHLRHHISPTG. Residues 9–19 show a composition bias toward basic residues; sequence SPSKRGMHRSH.

Belongs to the bacterial ribosomal protein bL32 family.

The chain is Large ribosomal subunit protein bL32 from Leptothrix cholodnii (strain ATCC 51168 / LMG 8142 / SP-6) (Leptothrix discophora (strain SP-6)).